A 237-amino-acid polypeptide reads, in one-letter code: MSYSRVLLKLSGEALMGSKPYGIDPEIVQSIAQDVSKVVQEGTQLAIVVGGGNIFRGLKGSSAGMDRATADYVGMLATVMNAITLQDGLERAGVETRVQTAIEMQQIAEPYIRRRAIRHLEKGRVVVFGGGCGNPFFTTDTTSALRAAEINADVIFKATKVDGVYNQDPKEYPEAIKYESLTFQEVLSKEIAVMDSTAIALCKDNKIPIVVFNIFQPGNINKAVAGEKIGSRISNSG.

9-12 (KLSG) contacts ATP. Gly51 is a binding site for UMP. The ATP site is built by Gly52 and Arg56. UMP is bound by residues Asp71 and 132-139 (CGNPFFTT). ATP contacts are provided by Thr159, Tyr165, and Asp168.

This sequence belongs to the UMP kinase family. In terms of assembly, homohexamer.

The protein localises to the cytoplasm. The catalysed reaction is UMP + ATP = UDP + ADP. The protein operates within pyrimidine metabolism; CTP biosynthesis via de novo pathway; UDP from UMP (UMPK route): step 1/1. Its activity is regulated as follows. Inhibited by UTP. In terms of biological role, catalyzes the reversible phosphorylation of UMP to UDP. The chain is Uridylate kinase from Prochlorococcus marinus (strain SARG / CCMP1375 / SS120).